Consider the following 320-residue polypeptide: MIACRMSSQDLSISAKLINGGIAGLVGVTCVFPIDLAKTRLQNQQGKDVYRGMTDCLMKTARAEGFLGMYRGAAVNLTLVTPEKAIKLAANDFLRQLLMQDGTQRNLKMEMLAGCGAGICQVVITCPMEMLKIQLQDAGRLAVCHQASASATPTSRPYSTGSTSTHRRPSATLIARELLRTQGLSGLYRGLGATLLRDIPFSIIYFPLFANLNQLGVSELTGKASFTHSFVAGCTAGSVAAVAVTPLDVLKTRIQTLKKGLGEDTYSGVTDCARKLWTQEGPAAFMKGAGCRALVIAPLFGIAQGVYFIGIGERILKCFE.

Solcar repeat units follow at residues 11–97, 105–215, and 224–313; these read LSIS…LRQL, RNLK…LNQL, and ASFT…GIGE. Transmembrane regions (helical) follow at residues 17-37, 66-86, and 110-128; these read LING…IDLA, FLGM…EKAI, and EMLA…TCPM. Ser-150 is subject to Phosphoserine. Transmembrane regions (helical) follow at residues 190 to 210, 230 to 250, and 293 to 313; these read GLGA…PLFA, FVAG…LDVL, and ALVI…GIGE.

It belongs to the mitochondrial carrier (TC 2.A.29) family.

The protein localises to the mitochondrion inner membrane. It carries out the reaction L-glutamate(in) + H(+)(in) = L-glutamate(out) + H(+)(out). Functionally, responsible for the transport of glutamate from the cytosol into the mitochondrial matrix with the concomitant import of a proton (symport system). The protein is Mitochondrial glutamate carrier 2 (Slc25a18) of Mus musculus (Mouse).